The following is a 663-amino-acid chain: MGVYRVCVSTGASIYAGSKNKVELWLVGQHGEVELGSCLRPTRNKEEEFKVNVSKYLGSLLFVRLRKKHFLKEDAWFCNWISVQALGAAEDKYWFPCYRWVVGDGVQSLPVGTGCTTVGDPQGLFQKHREQELEERRKLYQWGSWKEGLILNVAGSKLTDLPVDERFLEDKKIDFEASLAWGLAELALKNSLNILAPWKTLDDFNRIFWCGRSKLARRVRDSWQEDSLFGYQFLNGANPMLLRRSVQLPARLVFPPGMEELQAQLEKELKAGTLFEADFALLDNIKANVILYCQQYLAAPLVMLKLQPDGKLMPMVIQLHLPKIGSSPPPLFLPTDPPMVWLLAKCWVRSSDFQVHELNSHLLRGHLMAEVFTVATMRCLPSIHPVFKLIVPHLRYTLEINVRARNGLVSDFGIFDQIMSTGGGGHVQLLQQAGAFLTYRSFCPPDDLADRGLLGVESSFYAQDALRLWEIISRYVQGIMGLYYKTDEAVRDDLELQSWCREITEIGLQGAQKQGFPTSLQSVAQACHFVTMCIFTCTGQHSSIHLGQLDWFTWVPNAPCTMRLPPPTTKDATLETVMATLPNLHQSSLQMSIVWQLGRDQPIMVPLGQHQEEYFSGPEPRAVLEKFREELAIMDKEIEVRNEKLDIPYEYLRPSIVENSVAI.

The PLAT domain maps to 2-115; that stretch reads GVYRVCVSTG…VQSLPVGTGC (114 aa). The Lipoxygenase domain occupies 116-663; that stretch reads TTVGDPQGLF…PSIVENSVAI (548 aa). Residues histidine 361, histidine 366, histidine 541, histidine 545, and isoleucine 663 each coordinate Fe cation.

This sequence belongs to the lipoxygenase family. As to quaternary structure, interacts with PEBP1; in response to IL13/interleukin-13, prevents the interaction of PEBP1 with RAF1 to activate the ERK signaling cascade. Fe cation serves as cofactor. In terms of tissue distribution, detected in reticulocytes (at protein level).

It is found in the cytoplasm. The protein localises to the cytosol. The protein resides in the cell membrane. It localises to the lipid droplet. It carries out the reaction (5Z,8Z,11Z,14Z)-eicosatetraenoate + O2 = (12S)-hydroperoxy-(5Z,8Z,10E,14Z)-eicosatetraenoate. It catalyses the reaction (5Z,8Z,11Z,14Z)-eicosatetraenoate + O2 = (15S)-hydroperoxy-(5Z,8Z,11Z,13E)-eicosatetraenoate. The enzyme catalyses (9Z,12Z)-octadecadienoate + O2 = (13S)-hydroperoxy-(9Z,11E)-octadecadienoate. The catalysed reaction is (5Z,8Z,11Z,14Z)-eicosatetraenoate + 2 O2 = (14R,15S)-dihydroperoxy-(5Z,8Z,10E,12E)-eicosatetraenoate. It carries out the reaction (5Z,8Z,11Z,14Z)-eicosatetraenoate + 2 O2 = (8S,15S)-dihydroperoxy-(5Z,9E,11Z,13E)-eicosatetraenoate. It catalyses the reaction (14S,15R)-epoxy-(5Z,8Z,11Z)-eicosatrienoate + O2 = (8S)-hydroperoxy-(14S,15R)-epoxy-(5Z,9E,11Z)-eicosatrienoate. The enzyme catalyses (14S,15R)-epoxy-(5Z,8Z,11Z)-eicosatrienoate + O2 = (12S)-hydroperoxy-(14S,15R)-epoxy-(5Z,8Z,10E)-eicosatrienoate. The catalysed reaction is (14R,15S)-epoxy-(5Z,8Z,11Z)-eicosatrienoate + O2 = (5S)-hydroperoxy-(14R,15S)-epoxy-(6E,8Z,11Z)-eicosatrienoate. It carries out the reaction (14R,15S)-epoxy-(5Z,8Z,11Z)-eicosatrienoate + O2 = (12S)-hydroperoxy-(14R,15S)-epoxy-(5Z,8Z,10E)-eicosatrienoate. It catalyses the reaction (15R)-hydroperoxy-(5Z,8Z,11Z,13E)-eicosatetraenoate = 15-oxo-(5Z,8Z,11Z,13E)-eicosatetraenoate + H2O. The enzyme catalyses (15S)-hydroperoxy-(5Z,8Z,11Z,13E)-eicosatetraenoate = (14S,15S)-epoxy-(5Z,8Z,10E,12E)-eicosatetraenoate + H2O. The catalysed reaction is (12S)-hydroperoxy-(5Z,8Z,10E,14Z)-eicosatetraenoate = (8S)-hydroxy-(11S,12S)-epoxy-(5Z,9E,14Z)-eicosatrienoate. It carries out the reaction (4Z,7Z,10Z,13Z,16Z)-docosapentaenoate + O2 = 14-hydroperoxy-(4Z,7Z,10Z,12E,16Z)-docosapentaenoate. It catalyses the reaction (7Z,10Z,13Z,16Z,19Z)-docosapentaenoate + O2 = 14-hydroperoxy-(7Z,10Z,12E,16Z,19Z)-docosapentaenoate. The enzyme catalyses (4Z,7Z,10Z,13Z,16Z,19Z)-docosahexaenoate + O2 = (14S)-hydroperoxy-(4Z,7Z,10Z,12E,16Z,19Z)-docosahexaenoate. The catalysed reaction is (4Z,7Z,10Z,13Z,16Z,19Z)-docosahexaenoate + O2 = (17S)-hydroperoxy-(4Z,7Z,10Z,13Z,15E,19Z)-docosahexaenoate. It carries out the reaction (7S)-hydroperoxy-(4Z,8E,10Z,13Z,16Z,19Z)-docosahexaenoate + O2 = (7S,14S)-dihydroperoxy-(4Z,8E,10Z,12E,16Z,19Z)-docosahexaenoate. It catalyses the reaction (7S)-hydroperoxy-(4Z,8E,10Z,13Z,16Z,19Z)-docosahexaenoate + O2 = (7S,17S)-dihydroperoxy-(4Z,8E,10Z,13Z,15E,19Z)-docosahexaenoate. The enzyme catalyses (4Z,7Z,10Z,13Z,16Z,19Z)-docosahexaenoate + O2 = (11S)-hydroperoxy-(4Z,7Z,9E,13Z,16Z,19Z)-docosahexaenoate. The catalysed reaction is N-(5Z,8Z,11Z,14Z)-eicosatetraenoyl-taurine + O2 = N-(15S)-hydroperoxy-(5Z,8Z,11Z,13E)-eicosatetraenoyl-taurine. It carries out the reaction N-(5Z,8Z,11Z,14Z)-eicosatetraenoyl-gamma-aminobutanoate + O2 = N-(15S)-hydroperoxy-(5Z,8Z,11Z,13E)-eicosatetraenoyl-gamma-aminobutanoate. It catalyses the reaction N-(5Z,8Z,11Z,14Z)-eicosatetraenoyl-glycine + O2 = N-(15S)-hydroperoxy-(5Z,8Z,11Z,13E)-eicosatetraenoyl-glycine. The enzyme catalyses N-(5Z,8Z,11Z,14Z)-eicosatetraenoyl-L-alanine + O2 = N-(15S)-hydroperoxy-(5Z,8Z,11Z,13E)-eicosatetraenoyl-alanine. The catalysed reaction is N-(5Z,8Z,11Z,14Z)-eicosatetraenoyl-taurine + O2 = N-(12S)-hydroperoxy-(5Z,8Z,10E,14Z)-eicosatetraenoyl-taurine. It carries out the reaction N-(5Z,8Z,11Z,14Z)-eicosatetraenoyl-gamma-aminobutanoate + O2 = N-(12S)-hydroperoxy-(5Z,8Z,10E,14Z)-eicosatetraenoyl-gamma-aminobutanoate. It catalyses the reaction N-(5Z,8Z,11Z,14Z)-eicosatetraenoyl-glycine + O2 = N-(12S)-hydroperoxy-(5Z,8Z,10E,14Z)-eicosatetraenoyl-glycine. The enzyme catalyses N-(5Z,8Z,11Z,14Z)-eicosatetraenoyl-L-alanine + O2 = N-(12S)-hydroperoxy-(5Z,8Z,10E,14Z)-eicosatetraenoyl-alanine. The protein operates within lipid metabolism; hydroperoxy eicosatetraenoic acid biosynthesis. Non-heme iron-containing dioxygenase that catalyzes the stereo-specific peroxidation of free and esterified polyunsaturated fatty acids generating a spectrum of bioactive lipid mediators. It inserts peroxyl groups at C12 or C15 of arachidonate ((5Z,8Z,11Z,14Z)-eicosatetraenoate) producing both 12-hydroperoxyeicosatetraenoate/12-HPETE and 15-hydroperoxyeicosatetraenoate/15-HPETE. It may then act on 12-HPETE to produce hepoxilins, which may show pro-inflammatory properties. Can also peroxidize linoleate ((9Z,12Z)-octadecadienoate) to 13-hydroperoxyoctadecadienoate. May participate in the sequential oxidations of DHA ((4Z,7Z,10Z,13Z,16Z,19Z)-docosahexaenoate) to generate specialized pro-resolving mediators (SPMs)like resolvin D5 ((7S,17S)-diHPDHA) and (7S,14S)-diHPDHA, that actively down-regulate the immune response and have anti-aggregation properties with platelets. Can convert epoxy fatty acids to hydroperoxy-epoxides derivatives followed by an intramolecular nucleophilic substitution leading to the formation of monocyclic endoperoxides. Plays an important role during the maintenance of self-tolerance by peroxidizing membrane-bound phosphatidylethanolamine which can then signal the sorting process for clearance of apoptotic cells during inflammation and prevent an autoimmune response. In addition to its role in the immune and inflammatory responses, this enzyme may play a role in epithelial wound healing in the cornea through production of lipoxin A4 (LXA(4)) and docosahexaenoic acid-derived neuroprotectin D1 (NPD1; 10R,17S-HDHA), both lipid autacoids exhibit anti-inflammatory and neuroprotective properties. Furthermore, it may regulate actin polymerization which is crucial for several biological processes such as the phagocytosis of apoptotic cells. It is also implicated in the generation of endogenous ligands for peroxisome proliferator activated receptor (PPAR-gamma), hence modulating macrophage development and function. It may also exert a negative effect on skeletal development by regulating bone mass through this pathway. As well as participates in ER stress and downstream inflammation in adipocytes, pancreatic islets, and liver. Finally, it is also involved in the cellular response to IL13/interleukin-13. The protein is Polyunsaturated fatty acid lipoxygenase ALOX15 of Oryctolagus cuniculus (Rabbit).